We begin with the raw amino-acid sequence, 159 residues long: Ribosomal RNA large subunit methyltransferase H (159 aa).

S-adenosyl-L-methionine contacts are provided by residues Leu-76, Gly-108, and 127 to 132 (FSKMTF).

This sequence belongs to the RNA methyltransferase RlmH family. Homodimer.

Its subcellular location is the cytoplasm. The catalysed reaction is pseudouridine(1915) in 23S rRNA + S-adenosyl-L-methionine = N(3)-methylpseudouridine(1915) in 23S rRNA + S-adenosyl-L-homocysteine + H(+). Its function is as follows. Specifically methylates the pseudouridine at position 1915 (m3Psi1915) in 23S rRNA. This chain is Ribosomal RNA large subunit methyltransferase H, found in Clostridium tetani (strain Massachusetts / E88).